The sequence spans 95 residues: Small ribosomal subunit protein mS37 (95 aa).

The CHCH domain maps to 27–69 (ANRCLVLMSNLLQCWSSNGHMNPVCEKLATDLKACTSQNVMGS). 2 consecutive short sequence motifs (cx9C motif) follow at residues 30–40 (CLVLMSNLLQC) and 51–61 (CEKLATDLKAC). Cystine bridges form between C30-C61 and C40-C51.

The protein belongs to the mitochondrion-specific ribosomal protein mS37 family. In terms of assembly, component of the mitochondrial small ribosomal subunit.

Its subcellular location is the mitochondrion. Its function is as follows. Involved in mitochondrial genome encoded proteins translation. The polypeptide is Small ribosomal subunit protein mS37 (MRP10) (Eremothecium gossypii (strain ATCC 10895 / CBS 109.51 / FGSC 9923 / NRRL Y-1056) (Yeast)).